Consider the following 361-residue polypeptide: MFPASTFHPCPHPYPQATKAGDGWRFGARGCRPAPPSFLPGYRQLMAAEYVDSHQRAQLMALLSRMGPRSVSSRDAAVQVNPRRDASVQCSLGRRTLQPAGCRASPDARSGSCQPRGHAGAGRSPRSWQTVAPFSSVTFCGLSSSLEVAGGRQTPTKGEGSPASSGTREPEPREVAARKAVPQPRSEEGDVQAAGQAGWEQQPPPEDRNSVAAMQSEPGSEEPCPAAEMAQDPGDSDAPRDQASPQSTEQDKERLRFQFLEQKYGYYHCKDCKIRWESAYVWCVQGTSKVYFKQFCRVCEKSYNPYRVEDITCQSCKRTRCACPVRLRHVDPKRPHRQDLCGRCKDKRLSCDSTFSFKYII.

Disordered stretches follow at residues 1 to 23 (MFPASTFHPCPHPYPQATKAGDG), 98 to 128 (QPAGCRASPDARSGSCQPRGHAGAGRSPRSW), and 148 to 252 (VAGG…EQDK). T154 carries the phosphothreonine; by CDK1 modification. Position 161 is a phosphoserine; by CDK1 (S161). Residues 168–177 (REPEPREVAA) are compositionally biased toward basic and acidic residues. A 3CxxC-type zinc finger spans residues 263-346 (KYGYYHCKDC…RQDLCGRCKD (84 aa)).

This sequence belongs to the ZAR1 family. Interacts with YBX2. Post-translationally, phosphorylation by CDK1 does not regulate formation of MARDO (mitochondria-associated ribonucleoprotein domain) membraneless compartment. Ubiquitinated and degradaded by the proteasome during oocyte meiotic maturation, leading to MARDO (mitochondria-associated ribonucleoprotein domain) membraneless compartment dissolution. Ovary. Expressed in primary oocytes (from primary through antral follicle stages) and during the progression from Meiosis I to Meiosis II. The mRNA is detected in growing oocytes (early primary follicle, type 3a) through fully grown oocytes (antral follicle, type 8).

The protein localises to the cytoplasm. Its subcellular location is the cytoplasmic ribonucleoprotein granule. Its function is as follows. mRNA-binding protein that mediates formation of MARDO (mitochondria-associated ribonucleoprotein domain), a membraneless compartment that stores maternal mRNAs in oocytes. MARDO assembly around mitochondria is directed by an increase in mitochondrial membrane potential during oocyte growth. Promotes formation of MARDO phase-separated membraneless compartment by undergoing liquid-liquid phase separation upon binding to maternal mRNAs. Binds to the 3'-UTR of maternal mRNAs. Maternal mRNAs stored in the MARDO are translationally repressed. Essential for female fertility and oocyte-to-embryo transition by coordinating maternal mRNA storage, translation and degradation. The polypeptide is Zygote arrest protein 1 (Mus musculus (Mouse)).